The following is a 175-amino-acid chain: ATP synthase subunit delta (175 aa).

It belongs to the ATPase delta chain family. In terms of assembly, F-type ATPases have 2 components, F(1) - the catalytic core - and F(0) - the membrane proton channel. F(1) has five subunits: alpha(3), beta(3), gamma(1), delta(1), epsilon(1). F(0) has three main subunits: a(1), b(2) and c(10-14). The alpha and beta chains form an alternating ring which encloses part of the gamma chain. F(1) is attached to F(0) by a central stalk formed by the gamma and epsilon chains, while a peripheral stalk is formed by the delta and b chains.

Its subcellular location is the cell inner membrane. Functionally, f(1)F(0) ATP synthase produces ATP from ADP in the presence of a proton or sodium gradient. F-type ATPases consist of two structural domains, F(1) containing the extramembraneous catalytic core and F(0) containing the membrane proton channel, linked together by a central stalk and a peripheral stalk. During catalysis, ATP synthesis in the catalytic domain of F(1) is coupled via a rotary mechanism of the central stalk subunits to proton translocation. This protein is part of the stalk that links CF(0) to CF(1). It either transmits conformational changes from CF(0) to CF(1) or is implicated in proton conduction. The chain is ATP synthase subunit delta from Sulfurovum sp. (strain NBC37-1).